We begin with the raw amino-acid sequence, 130 residues long: Sec-independent protein translocase protein TatB (130 aa).

Residues 1–21 (MFDIGFTELTLIFIIGLVVLG) form a helical membrane-spanning segment. 2 stretches are compositionally biased toward basic and acidic residues: residues 57 to 67 (QDMQERMEKQM) and 111 to 130 (PSDKDSADKNNHDQDSRRHD). The segment at 57–130 (QDMQERMEKQ…NHDQDSRRHD (74 aa)) is disordered.

It belongs to the TatB family. The Tat system comprises two distinct complexes: a TatABC complex, containing multiple copies of TatA, TatB and TatC subunits, and a separate TatA complex, containing only TatA subunits. Substrates initially bind to the TatABC complex, which probably triggers association of the separate TatA complex to form the active translocon.

The protein resides in the cell inner membrane. In terms of biological role, part of the twin-arginine translocation (Tat) system that transports large folded proteins containing a characteristic twin-arginine motif in their signal peptide across membranes. Together with TatC, TatB is part of a receptor directly interacting with Tat signal peptides. TatB may form an oligomeric binding site that transiently accommodates folded Tat precursor proteins before their translocation. In Alcanivorax borkumensis (strain ATCC 700651 / DSM 11573 / NCIMB 13689 / SK2), this protein is Sec-independent protein translocase protein TatB.